The primary structure comprises 206 residues: Outer-membrane lipoprotein carrier protein (206 aa).

The first 20 residues, 1 to 20 (MFYLIKKLPKFILFSLYLYA), serve as a signal peptide directing secretion.

It belongs to the LolA family. In terms of assembly, monomer.

The protein localises to the periplasm. Functionally, participates in the translocation of lipoproteins from the inner membrane to the outer membrane. Only forms a complex with a lipoprotein if the residue after the N-terminal Cys is not an aspartate (The Asp acts as a targeting signal to indicate that the lipoprotein should stay in the inner membrane). The polypeptide is Outer-membrane lipoprotein carrier protein (Wigglesworthia glossinidia brevipalpis).